A 378-amino-acid polypeptide reads, in one-letter code: Chorismate synthase (378 aa).

Arginine 49 serves as a coordination point for NADP(+). FMN-binding positions include 126-128 (RAS), glycine 287, 302-306 (KPTAT), and arginine 328.

This sequence belongs to the chorismate synthase family. In terms of assembly, homotetramer. FMNH2 is required as a cofactor.

It carries out the reaction 5-O-(1-carboxyvinyl)-3-phosphoshikimate = chorismate + phosphate. The protein operates within metabolic intermediate biosynthesis; chorismate biosynthesis; chorismate from D-erythrose 4-phosphate and phosphoenolpyruvate: step 7/7. Functionally, catalyzes the anti-1,4-elimination of the C-3 phosphate and the C-6 proR hydrogen from 5-enolpyruvylshikimate-3-phosphate (EPSP) to yield chorismate, which is the branch point compound that serves as the starting substrate for the three terminal pathways of aromatic amino acid biosynthesis. This reaction introduces a second double bond into the aromatic ring system. This chain is Chorismate synthase, found in Synechococcus sp. (strain JA-3-3Ab) (Cyanobacteria bacterium Yellowstone A-Prime).